A 352-amino-acid chain; its full sequence is Ubiquitin thioesterase otulin (352 aa).

The interval 1–49 (MSRGTMPQPGAWPGASCAETPAREAGAAARDGGKVTAGAQPRAATRCPA) is disordered. Over residues 18–30 (AETPAREAGAAAR) the composition is skewed to low complexity. Residues 49-73 (AEHEEDMYRAADEIEKEKELLIHER) adopt a coiled-coil conformation. Residues 52-57 (EEDMYR) carry the PIM motif motif. Residue tyrosine 56 is modified to Phosphotyrosine. Linear diubiquitin binding regions lie at residues 95–96 (EW) and 124–126 (RGD). An OTU domain is found at 118-346 (TSIRRVRGDN…DRHYNIPVRV (229 aa)). Residue aspartate 126 is part of the active site. Cysteine 129 serves as the catalytic Nucleophile. Linear diubiquitin binding regions lie at residues 255 to 259 (FFSVL), 283 to 289 (TGGLEQV), and 336 to 338 (DDR). The active site involves histidine 339. Residues 349–352 (ETSV) carry the PDZ-binding motif.

The protein belongs to the peptidase C65 family. Otulin subfamily. In terms of assembly, interacts (via the PUB domain) with RNF31 (via the PIM motif); the interaction is direct. Interacts with DVL2. In terms of processing, ubiquitinated. Acetylated. Post-translationally, phosphorylated. Phosphorylation at Tyr-56 prevents interaction with RNF31; dephosphorylation promotes interaction with RNF31 and the LUBAC complex.

It localises to the cytoplasm. It catalyses the reaction Thiol-dependent hydrolysis of ester, thioester, amide, peptide and isopeptide bonds formed by the C-terminal Gly of ubiquitin (a 76-residue protein attached to proteins as an intracellular targeting signal).. In terms of biological role, deubiquitinase that specifically removes linear ('Met-1'-linked) polyubiquitin chains to substrates and acts as a regulator of angiogenesis and innate immune response. Required during angiogenesis, craniofacial and neuronal development by regulating the canonical Wnt signaling together with the LUBAC complex. Acts as a negative regulator of NF-kappa-B by regulating the activity of the LUBAC complex. OTULIN function is mainly restricted to homeostasis of the LUBAC complex: acts by removing 'Met-1'-linked autoubiquitination of the LUBAC complex, thereby preventing inactivation of the LUBAC complex. Acts as a key negative regulator of inflammation by restricting spontaneous inflammation and maintaining immune homeostasis. In myeloid cell, required to prevent unwarranted secretion of cytokines leading to inflammation and autoimmunity by restricting linear polyubiquitin formation. Plays a role in innate immune response by restricting linear polyubiquitin formation on LUBAC complex in response to NOD2 stimulation, probably to limit NOD2-dependent pro-inflammatory signaling. This is Ubiquitin thioesterase otulin from Mus musculus (Mouse).